Consider the following 385-residue polypeptide: F-box only protein 4 (385 aa).

A phosphoserine mark is found at Ser-11 and Ser-46. The 47-residue stretch at 54 to 100 folds into the F-box domain; it reads TSALTRLPVDVQLYILSFLSPHDLCQLGSTDHYWNKTIRDPILWRYF.

In terms of assembly, homodimer. Part of the SCF (SKP1-CUL1-F-box) E3 ubiquitin-protein ligase complex SCF(FBXO4) formed of CUL1, SKP1, RBX1 and FBXO4. Interacts with TERF1; this interaction is prevented in the presence of GNL3L. Identified in a complex with CRYAB and CCND1. Phosphorylation at Ser-11 varies during the cell cycle. It is low in resting cells and high in the S phase and the G2/M phase of the cell cycle. Phosphorylation is decreased during late G1 phase. Phosphorylation at Ser-11 is important for homodimerization and for optimal ubiquitin ligase activity towards CCND1.

It localises to the cytoplasm. It functions in the pathway protein modification; protein ubiquitination. Its function is as follows. Substrate recognition component of a SCF (SKP1-CUL1-F-box protein) E3 ubiquitin-protein ligase complex that mediates the ubiquitination and subsequent proteasomal degradation of target proteins. Promotes ubiquitination of cyclin-D1 (CCND1) and its subsequent proteasomal degradation. However, it does not act as a major regulator of CCND1 stability during the G1/S transition. Recognizes TERF1 and promotes its ubiquitination together with UBE2D1. Promotes ubiquitination of FXR1 following phosphorylation of FXR1 by GSK3B, leading to FXR1 degradation by the proteasome. The chain is F-box only protein 4 from Mus musculus (Mouse).